We begin with the raw amino-acid sequence, 178 residues long: Natriuretic and helokinestatin peptides (178 aa).

An N-terminal signal peptide occupies residues 1-25 (MNPRLACSTWLPLLLVLFTLDQGRA). Propeptides lie at residues 26-58 (NPVERGQEYRSLSKRFDDDSTELILEPRASEEN), 69-73 (ASDEN), 85-89 (ASDEN), 103-112 (ASEQKGPPFN), and 123-146 (AANENALRKLIKRSFERSPGRNKR). 2 disordered regions span residues 69–107 (ASDENVPPAYVPLVPRASDENVPPPPLQMPLIPRASEQK) and 135–155 (RSFERSPGRNKRLSPGDGCFG). An intrachain disulfide couples C153 to C169.

This sequence in the C-terminal section; belongs to the natriuretic peptide family. In terms of tissue distribution, expressed by the venom gland.

It localises to the secreted. In terms of biological role, helokinestatins antagonize the vasodilatory actions of bradykinin at the B2 bradykinin receptor (BDKRB2), with helokinestatin-1 being the most potent antagonist. Functionally, exhibits hypotensive and vasodepressor activities, possibly by targeting natriuretic peptide receptors NPR1 and NPR2. The protein is Natriuretic and helokinestatin peptides of Heloderma suspectum cinctum (Banded Gila monster).